We begin with the raw amino-acid sequence, 144 residues long: D-aminoacyl-tRNA deacylase (144 aa).

The short motif at G136–P137 is the Gly-cisPro motif, important for rejection of L-amino acids element.

This sequence belongs to the DTD family. As to quaternary structure, homodimer.

It is found in the cytoplasm. The catalysed reaction is glycyl-tRNA(Ala) + H2O = tRNA(Ala) + glycine + H(+). The enzyme catalyses a D-aminoacyl-tRNA + H2O = a tRNA + a D-alpha-amino acid + H(+). Its function is as follows. An aminoacyl-tRNA editing enzyme that deacylates mischarged D-aminoacyl-tRNAs. Also deacylates mischarged glycyl-tRNA(Ala), protecting cells against glycine mischarging by AlaRS. Acts via tRNA-based rather than protein-based catalysis; rejects L-amino acids rather than detecting D-amino acids in the active site. By recycling D-aminoacyl-tRNA to D-amino acids and free tRNA molecules, this enzyme counteracts the toxicity associated with the formation of D-aminoacyl-tRNA entities in vivo and helps enforce protein L-homochirality. This chain is D-aminoacyl-tRNA deacylase, found in Aliivibrio salmonicida (strain LFI1238) (Vibrio salmonicida (strain LFI1238)).